The sequence spans 88 residues: Translation initiation factor IF-1 3 (88 aa).

Positions 1–72 constitute an S1-like domain; it reads MAKEELLELD…TKGCINFRHK (72 aa).

Belongs to the IF-1 family. In terms of assembly, component of the 30S ribosomal translation pre-initiation complex which assembles on the 30S ribosome in the order IF-2 and IF-3, IF-1 and N-formylmethionyl-tRNA(fMet); mRNA recruitment can occur at any time during PIC assembly.

It localises to the cytoplasm. Functionally, one of the essential components for the initiation of protein synthesis. Stabilizes the binding of IF-2 and IF-3 on the 30S subunit to which N-formylmethionyl-tRNA(fMet) subsequently binds. Helps modulate mRNA selection, yielding the 30S pre-initiation complex (PIC). Upon addition of the 50S ribosomal subunit IF-1, IF-2 and IF-3 are released leaving the mature 70S translation initiation complex. The sequence is that of Translation initiation factor IF-1 3 from Burkholderia orbicola (strain AU 1054).